The following is a 427-amino-acid chain: Hydroxylamine reductase (427 aa).

[4Fe-4S] cluster is bound by residues Cys3, Cys6, Cys15, and Cys21. Positions 129, 153, 197, 283, 311, 336, 370, and 372 each coordinate hybrid [4Fe-2O-2S] cluster. Cys283 bears the Cysteine persulfide mark.

Belongs to the HCP family. [4Fe-4S] cluster is required as a cofactor. It depends on hybrid [4Fe-2O-2S] cluster as a cofactor.

It is found in the cytoplasm. The catalysed reaction is A + NH4(+) + H2O = hydroxylamine + AH2 + H(+). Functionally, catalyzes the reduction of hydroxylamine to form NH(3) and H(2)O. In Methanothermobacter thermautotrophicus (strain ATCC 29096 / DSM 1053 / JCM 10044 / NBRC 100330 / Delta H) (Methanobacterium thermoautotrophicum), this protein is Hydroxylamine reductase.